The sequence spans 333 residues: Fibronectin type III domain-containing protein 11 (333 aa).

The region spanning Pro-212–Gly-310 is the Fibronectin type-III domain. The disordered stretch occupies residues Thr-307–Arg-333.

This chain is Fibronectin type III domain-containing protein 11, found in Bos taurus (Bovine).